Consider the following 339-residue polypeptide: ATPase GET3 (339 aa).

34–41 contributes to the ATP binding site; sequence KGGVGKTT. Asp63 is a catalytic residue. 2 residues coordinate ATP: Glu243 and Asn270. Residues Cys281 and Cys284 each coordinate Zn(2+).

Belongs to the arsA ATPase family. In terms of assembly, homodimer.

It is found in the cytoplasm. The protein resides in the endoplasmic reticulum. ATPase required for the post-translational delivery of tail-anchored (TA) proteins to the endoplasmic reticulum. Recognizes and selectively binds the transmembrane domain of TA proteins in the cytosol. This complex then targets to the endoplasmic reticulum by membrane-bound receptors, where the tail-anchored protein is released for insertion. This process is regulated by ATP binding and hydrolysis. ATP binding drives the homodimer towards the closed dimer state, facilitating recognition of newly synthesized TA membrane proteins. ATP hydrolysis is required for insertion. Subsequently, the homodimer reverts towards the open dimer state, lowering its affinity for the membrane-bound receptor, and returning it to the cytosol to initiate a new round of targeting. The polypeptide is ATPase GET3 (Coccidioides immitis (strain RS) (Valley fever fungus)).